The sequence spans 151 residues: 6,7-dimethyl-8-ribityllumazine synthase (151 aa).

5-amino-6-(D-ribitylamino)uracil contacts are provided by residues Phe23, 55-57 (AYE), and 79-81 (AVI). 84–85 (AT) provides a ligand contact to (2S)-2-hydroxy-3-oxobutyl phosphate. Catalysis depends on His87, which acts as the Proton donor. Phe111 lines the 5-amino-6-(D-ribitylamino)uracil pocket. (2S)-2-hydroxy-3-oxobutyl phosphate is bound at residue Arg125.

It belongs to the DMRL synthase family.

The enzyme catalyses (2S)-2-hydroxy-3-oxobutyl phosphate + 5-amino-6-(D-ribitylamino)uracil = 6,7-dimethyl-8-(1-D-ribityl)lumazine + phosphate + 2 H2O + H(+). It functions in the pathway cofactor biosynthesis; riboflavin biosynthesis; riboflavin from 2-hydroxy-3-oxobutyl phosphate and 5-amino-6-(D-ribitylamino)uracil: step 1/2. In terms of biological role, catalyzes the formation of 6,7-dimethyl-8-ribityllumazine by condensation of 5-amino-6-(D-ribitylamino)uracil with 3,4-dihydroxy-2-butanone 4-phosphate. This is the penultimate step in the biosynthesis of riboflavin. In Leptospira interrogans serogroup Icterohaemorrhagiae serovar Lai (strain 56601), this protein is 6,7-dimethyl-8-ribityllumazine synthase.